The primary structure comprises 198 residues: Elongation factor Ts (198 aa).

Residues 81-84 (TDFV) are involved in Mg(2+) ion dislocation from EF-Tu.

The protein belongs to the EF-Ts family.

It is found in the cytoplasm. Its function is as follows. Associates with the EF-Tu.GDP complex and induces the exchange of GDP to GTP. It remains bound to the aminoacyl-tRNA.EF-Tu.GTP complex up to the GTP hydrolysis stage on the ribosome. This chain is Elongation factor Ts, found in Dictyoglomus thermophilum (strain ATCC 35947 / DSM 3960 / H-6-12).